We begin with the raw amino-acid sequence, 938 residues long: Isoleucine--tRNA ligase (938 aa).

Positions 58 to 68 (PYANGNIHIGH) match the 'HIGH' region motif. An L-isoleucyl-5'-AMP-binding site is contributed by glutamate 561. A 'KMSKS' region motif is present at residues 602-606 (KMSKS). ATP is bound at residue lysine 605. 4 residues coordinate Zn(2+): cysteine 901, cysteine 904, cysteine 921, and cysteine 924.

Belongs to the class-I aminoacyl-tRNA synthetase family. IleS type 1 subfamily. As to quaternary structure, monomer. The cofactor is Zn(2+).

It is found in the cytoplasm. It catalyses the reaction tRNA(Ile) + L-isoleucine + ATP = L-isoleucyl-tRNA(Ile) + AMP + diphosphate. Functionally, catalyzes the attachment of isoleucine to tRNA(Ile). As IleRS can inadvertently accommodate and process structurally similar amino acids such as valine, to avoid such errors it has two additional distinct tRNA(Ile)-dependent editing activities. One activity is designated as 'pretransfer' editing and involves the hydrolysis of activated Val-AMP. The other activity is designated 'posttransfer' editing and involves deacylation of mischarged Val-tRNA(Ile). The chain is Isoleucine--tRNA ligase from Yersinia pestis bv. Antiqua (strain Angola).